A 299-amino-acid polypeptide reads, in one-letter code: Glycine--tRNA ligase alpha subunit (299 aa).

The protein belongs to the class-II aminoacyl-tRNA synthetase family. Tetramer of two alpha and two beta subunits.

Its subcellular location is the cytoplasm. The catalysed reaction is tRNA(Gly) + glycine + ATP = glycyl-tRNA(Gly) + AMP + diphosphate. In Lactiplantibacillus plantarum (strain ATCC BAA-793 / NCIMB 8826 / WCFS1) (Lactobacillus plantarum), this protein is Glycine--tRNA ligase alpha subunit.